Here is a 45-residue protein sequence, read N- to C-terminus: Photosystem II reaction center protein K (45 aa).

Residues 1 to 8 (MEAALLLA) constitute a propeptide that is removed on maturation. Residues 24-44 (LPIIPVFFLLLAFVWQAAVGF) form a helical membrane-spanning segment.

It belongs to the PsbK family. As to quaternary structure, PSII is composed of 1 copy each of membrane proteins PsbA, PsbB, PsbC, PsbD, PsbE, PsbF, PsbH, PsbI, PsbJ, PsbK, PsbL, PsbM, PsbT, PsbX, PsbY, PsbZ, Psb30/Ycf12, peripheral proteins PsbO, CyanoQ (PsbQ), PsbU, PsbV and a large number of cofactors. It forms dimeric complexes.

It is found in the cellular thylakoid membrane. In terms of biological role, one of the components of the core complex of photosystem II (PSII). PSII is a light-driven water:plastoquinone oxidoreductase that uses light energy to abstract electrons from H(2)O, generating O(2) and a proton gradient subsequently used for ATP formation. It consists of a core antenna complex that captures photons, and an electron transfer chain that converts photonic excitation into a charge separation. The polypeptide is Photosystem II reaction center protein K (Nostoc sp. (strain PCC 7120 / SAG 25.82 / UTEX 2576)).